The chain runs to 347 residues: UPF0284 protein M1425_0030 (347 aa).

The protein belongs to the UPF0284 family.

The chain is UPF0284 protein M1425_0030 from Saccharolobus islandicus (strain M.14.25 / Kamchatka #1) (Sulfolobus islandicus).